We begin with the raw amino-acid sequence, 888 residues long: 3-hydroxy-3-methylglutaryl-coenzyme A reductase (888 aa).

The Cytoplasmic segment spans residues 1–9 (MLSRLFRMH). Residues 10–39 (GLFVASHPWEVIVGTVTLTICMMSMNMFTG) traverse the membrane as a helical segment. The Lumenal portion of the chain corresponds to 40–56 (NNKICGWNYECPKFEED). Residues 57–78 (VLSSDIIILTITRCIAILYIYF) traverse the membrane as a helical segment. The SSD domain occupies 61–218 (DIIILTITRC…MTFFPACVSL (158 aa)). The short motif at 75-78 (YIYF) is the INSIG-binding motif element. Residues 79 to 89 (QFQNLRQLGSK) are Cytoplasmic-facing. Residue Lys-89 forms a Glycyl lysine isopeptide (Lys-Gly) (interchain with G-Cter in ubiquitin) linkage. Residues 90–114 (YILGIAGLFTIFSSFVFSTVVIHFL) form a helical membrane-spanning segment. Topologically, residues 115-123 (DKELTGLNE) are lumenal. A helical membrane pass occupies residues 124–149 (ALPFFLLLIDLSRASTLAKFALSSNS). The Cytoplasmic portion of the chain corresponds to 150–159 (QDEVRENIAR). A helical membrane pass occupies residues 160–187 (GMAILGPTFTLDALVECLVIGVGTMSGV). The Lumenal segment spans residues 188-191 (RQLE). The chain crosses the membrane as a helical span at residues 192–220 (IMCCFGCMSVLANYFVFMTFFPACVSLVL). At 221–248 (ELSRESREGRPIWLLSHFARVLEEEENK) the chain is on the cytoplasmic side. Lys-248 participates in a covalent cross-link: Glycyl lysine isopeptide (Lys-Gly) (interchain with G-Cter in ubiquitin). Residues 249-275 (PNPVTQRVKMIMSLGLVLVHAHSRWIA) form a helical membrane-spanning segment. Residues 276 to 314 (DPSPQNSTADTSKVSLGLDENVSKRIEPSVSLWQFYLSK) lie on the Lumenal side of the membrane. Residues Asn-281 and Asn-296 are each glycosylated (N-linked (GlcNAc...) asparagine). The chain crosses the membrane as a helical span at residues 315–339 (MISMDIEQVITLSLALLLAVKYIFF). Residues 340–888 (EQTETESTLS…LQGACTKKTA (549 aa)) lie on the Cytoplasmic side of the membrane. Catalysis depends on charge relay system residues Glu-559, Lys-691, and Asp-767. Residue His-866 is the Proton donor of the active site. Residue Ser-872 is modified to Phosphoserine; by AMPK.

It belongs to the HMG-CoA reductase family. As to quaternary structure, homotetramer. Homodimer. Interacts (via its SSD) with INSIG1; the interaction, accelerated by sterols, leads to the recruitment of HMGCR to AMFR/gp78 for its ubiquitination by the sterol-mediated ERAD pathway. Interacts with UBIAD1. Post-translationally, undergoes sterol-mediated ubiquitination and ER-associated degradation (ERAD). Accumulation of sterols in the endoplasmic reticulum (ER) membrane, triggers binding of the reductase to the ER membrane protein INSIG1 or INSIG2. The INSIG1 binding leads to the recruitment of the ubiquitin ligase, AMFR/gp78, RNF139 or RNF145, initiating ubiquitination of the reductase. The ubiquitinated reductase is then extracted from the ER membrane and delivered to cytosolic 26S proteosomes by a mechanism probably mediated by the ATPase Valosin-containing protein VCP/p97. The INSIG2-binding leads to the recruitment of the ubiquitin ligase RNF139, initiating ubiquitination of the reductase. Lys-248 is the main site of ubiquitination. Ubiquitination is enhanced by the presence of a geranylgeranylated protein. N-glycosylated. Deglycosylated by NGLY1 on release from the endoplasmic reticulum (ER) in a sterol-mediated manner. In terms of processing, phosphorylated. Phosphorylation at Ser-872 reduces the catalytic activity.

It is found in the endoplasmic reticulum membrane. It localises to the peroxisome membrane. It carries out the reaction (R)-mevalonate + 2 NADP(+) + CoA = (3S)-3-hydroxy-3-methylglutaryl-CoA + 2 NADPH + 2 H(+). Its pathway is metabolic intermediate biosynthesis; (R)-mevalonate biosynthesis; (R)-mevalonate from acetyl-CoA: step 3/3. Regulated by a negative feedback mechanism through sterols and non-sterol metabolites derived from mevalonate. Phosphorylation at Ser-872 down-regulates the catalytic activity. Catalyzes the conversion of (3S)-hydroxy-3-methylglutaryl-CoA (HMG-CoA) to mevalonic acid, the rate-limiting step in the synthesis of cholesterol and other isoprenoids, thus plays a critical role in cellular cholesterol homeostasis. The polypeptide is 3-hydroxy-3-methylglutaryl-coenzyme A reductase (HMGCR) (Pongo abelii (Sumatran orangutan)).